Reading from the N-terminus, the 108-residue chain is Cytochrome c (108 aa).

Residues Cys19, Cys22, His23, and Met85 each coordinate heme c.

This sequence belongs to the cytochrome c family. Post-translationally, binds 1 heme c group covalently per subunit.

Its subcellular location is the mitochondrion intermembrane space. Functionally, electron carrier protein. The oxidized form of the cytochrome c heme group can accept an electron from the heme group of the cytochrome c1 subunit of cytochrome reductase. Cytochrome c then transfers this electron to the cytochrome oxidase complex, the final protein carrier in the mitochondrial electron-transport chain. The polypeptide is Cytochrome c (Cochliobolus lunatus (Filamentous fungus)).